A 956-amino-acid chain; its full sequence is Outer capsid protein VP2 (956 aa).

Belongs to the orbivirus VP2 family.

The protein resides in the virion. Its function is as follows. The VP2 protein is one of the two proteins (with VP5) which constitute the virus particle outer capsid. It is the major target of the host immunogenic response. Responsible for viral attachment to target host cell, probably by binding to sialic acid. This attachment induces virion internalization predominantly through clathrin-dependent endocytosis. This is Outer capsid protein VP2 (Segment-2) from Bluetongue virus 10 (isolate USA) (BTV 10).